Here is a 341-residue protein sequence, read N- to C-terminus: THO complex subunit 6 (341 aa).

WD repeat units lie at residues 22–61, 74–112, 124–165, 166–205, 215–254, 256–293, and 295–339; these read RLHM…SSEA, AHDG…GCKE, LEVP…RVLR, GHTD…EVQT, SRPH…PTTI, PIRA…KAQV, and GSSP…AFSL. At Ser180 the chain carries Phosphoserine.

It belongs to the WD repeat THOC6 family. As to quaternary structure, component of the THO subcomplex, which is composed of THOC1, THOC2, THOC3, THOC5, THOC6 and THOC7. The THO subcomplex interacts with DDX39B to form the THO-DDX39B complex which multimerizes into a 28-subunit tetrameric assembly. Component of the transcription/export (TREX) complex at least composed of ALYREF/THOC4, DDX39B, SARNP/CIP29, CHTOP and the THO subcomplex; in the complex interacts with THOC5; together with THOC5 and THOC7, plays a key structural role in the oligomerization of the THO-DDX39B complex. TREX seems to have a dynamic structure involving ATP-dependent remodeling.

The protein localises to the nucleus. It is found in the nucleus speckle. In terms of biological role, component of the THO subcomplex of the TREX complex which is thought to couple mRNA transcription, processing and nuclear export, and which specifically associates with spliced mRNA and not with unspliced pre-mRNA. Plays a key structural role in the oligomerization of the THO-DDX39B complex. TREX is recruited to spliced mRNAs by a transcription-independent mechanism, binds to mRNA upstream of the exon-junction complex (EJC) and is recruited in a splicing- and cap-dependent manner to a region near the 5' end of the mRNA where it functions in mRNA export to the cytoplasm via the TAP/NXF1 pathway. Plays a role in apoptosis negative control involved in brain development. Its function is as follows. (Microbial infection) The TREX complex is essential for the export of Kaposi's sarcoma-associated herpesvirus (KSHV) intronless mRNAs and infectious virus production. The chain is THO complex subunit 6 (THOC6) from Homo sapiens (Human).